The chain runs to 206 residues: Superoxide dismutase [Mn] (206 aa).

Residues His30, His78, Asp166, and His170 each contribute to the Mn(2+) site.

The protein belongs to the iron/manganese superoxide dismutase family. In terms of assembly, homodimer. The cofactor is Mn(2+).

It catalyses the reaction 2 superoxide + 2 H(+) = H2O2 + O2. Destroys superoxide anion radicals which are normally produced within the cells and which are toxic to biological systems. In Chlamydia trachomatis serovar D (strain ATCC VR-885 / DSM 19411 / UW-3/Cx), this protein is Superoxide dismutase [Mn] (sodA).